The following is a 309-amino-acid chain: Probable cell division protein kinase ECU11_1290 (309 aa).

In terms of domain architecture, Protein kinase spans 4–288; the sequence is YENIKQVGEG…VISSHKNTYI (285 aa). ATP contacts are provided by residues 10 to 18 and Lys-33; that span reads VGEGAFGQV. Catalysis depends on Asp-124, which acts as the Proton acceptor.

It belongs to the protein kinase superfamily. CMGC Ser/Thr protein kinase family. CDC2/CDKX subfamily.

It is found in the nucleus. The catalysed reaction is L-seryl-[protein] + ATP = O-phospho-L-seryl-[protein] + ADP + H(+). The enzyme catalyses L-threonyl-[protein] + ATP = O-phospho-L-threonyl-[protein] + ADP + H(+). May play a role in the control of the eukaryotic cell cycle. This chain is Probable cell division protein kinase ECU11_1290, found in Encephalitozoon cuniculi (strain GB-M1) (Microsporidian parasite).